The sequence spans 803 residues: Rho guanine nucleotide exchange factor 7 (803 aa).

Position 1 is an N-acetylmethionine (M1). Residues 1–133 (MNSAEQTVTW…SLVTLNKVTA (133 aa)) form the Calponin-homology (CH) domain. An N-acetylthreonine modification is found at N2. Residues S153 and S176 each carry the phosphoserine modification. An SH3 domain is found at 184-243 (NNQLVVRAKFNFQQTNEDELSFSKGDVIHVTRVEEGGWWEGTLNGRTGWFPSNYVREVKA). Phosphoserine occurs at positions 249 and 257. The region spanning 271 to 451 (YYNVVLQNIL…KNLSAQCQEV (181 aa)) is the DH domain. Residues 473 to 578 (DIKTLGNVTY…WVEHLQKQTK (106 aa)) enclose the PH domain. Phosphoserine is present on residues S518, C560, and V579. Positions 580-655 (TSVGNPTIKP…TPKPWSLSCL (76 aa)) are disordered. Over residues 593 to 606 (PSHTLPSHPVTPSS) the composition is skewed to polar residues. K645 and S664 each carry phosphoserine. A compositionally biased stretch (basic residues) spans 678 to 690 (KTMKKLLPKRKPE). Disordered stretches follow at residues 678-704 (KTMK…RKST) and 748-773 (DDQP…LSED). The span at 691-700 (RKPSDEEFAS) shows a compositional bias: basic and acidic residues. Position 694 is a phosphoserine; by CaMK1 (S694). The span at 752-765 (SLDSLGRRSSLSRL) shows a compositional bias: low complexity.

Interacts with PAK kinases through the SH3 domain. Interacts with GIT1 and TGFB1I1. Interacts with PTK2/FAK1 and RAC1. Interacts with ITCH and PARVB. Interacts with unphosphorylated PAK1. Interacts with SCRIB; interaction is direct and may play a role in regulation of apoptosis. Interacts with FRMPD4 (via N-terminus). Interacts with CaMK1. Interacts with BIN2. Interacts with YWHAZ. Interacts (via PH domain) with NOX1 (via FAD-binding FR-type domain). In terms of assembly, interacts with SNX27. Phosphorylated by PTK2/FAK1; this promotes interaction with RAC1. Phosphorylated on Ser-694 by CaMK1; enhancement of GEF activity and downstream activation of RAC1.

It is found in the cell junction. The protein localises to the focal adhesion. The protein resides in the cell projection. It localises to the ruffle. Its subcellular location is the cytoplasm. It is found in the cell cortex. The protein localises to the lamellipodium. Functionally, acts as a RAC1 guanine nucleotide exchange factor (GEF) and can induce membrane ruffling. Functions in cell migration, attachment and cell spreading. Promotes targeting of RAC1 to focal adhesions. May function as a positive regulator of apoptosis. Downstream of NMDA receptors and CaMKK-CaMK1 signaling cascade, promotes the formation of spines and synapses in hippocampal neurons. This chain is Rho guanine nucleotide exchange factor 7 (ARHGEF7), found in Homo sapiens (Human).